The chain runs to 333 residues: S-adenosylmethionine-dependent nucleotide dehydratase (333 aa).

Residues 1–239 (MNIKTIVINW…SAPQKQNNVI (239 aa)) form the Radical SAM core domain. The [4Fe-4S] cluster site is built by Cys16, Cys20, and Cys23.

This sequence belongs to the radical SAM superfamily. Viperin family. The cofactor is [4Fe-4S] cluster.

The catalysed reaction is GTP + AH2 + S-adenosyl-L-methionine = 3'-deoxy-3',4'-didehydro-GTP + 5'-deoxyadenosine + L-methionine + A + H2O + H(+). In terms of biological role, expression of pVip56 in E.coli (strain MG1655) confers resistance to phage P1; has no effect against T7. Catalyzes the conversion of guanosine triphosphate (GTP) to 3'-deoxy-3',4'-didehydro-GTP (ddhGTP), probably via a SAM-dependent radical mechanism. The modified nucleotide represses transcription from T7 RNA polymerase-directed genes (possibly by acting as chain terminators), strongly suggesting these nucleotides block viral polymerase transcription. How this protein allows bacteria to resist viruses that do not encode their own RNA polymerase (such as lambda, P1) is unknown. The sequence is that of S-adenosylmethionine-dependent nucleotide dehydratase from Fibrobacter sp. (strain UWH6).